Consider the following 697-residue polypeptide: MAREYKLEDYRNIGIMAHIDAGKTTTTERVLFHTGKIHKIGETHEGESQMDWMVQEQERGITITSAATTAYWGGKRLNIIDTPGHVDFTVEVERSLRVLDGAVAVLDAQSGVEPQTETVWRQATNYNVPRIVYVNKMDKAGANFKASTESLRKLLGANAHPIQLNIGEEAQFTGIIDLVEMKAYEFDGKPEENMKEIPIPAHLLDEATLMRSSLIESVADFDEEIMEALLEEKEVSIEKIKAAIRKATLSATYFPVVCGTSFKNKGVKLMLNAIVDYLPSPLDIPPMKAYKGEGEISIPASDDEFFSSLAFKVMNDPYVGNLTFFRVYSGILNKGTYLYNSTKGEKERIGRILLMHANSRTDIDEVRTGDIGAAVGLKFTTTGDTLIDEKHKDIVLENMNFPEPVISQALEPASKDASEKLSLALQRLAAEDPTFKYYTDEETGQTIIAGMGELHLDIIVDRLKREFKVAANVGAPQVSYRETITKSAEVEGIHKKQSGGKGQYGHVWIKYEPNPDKGFEFVDKIVGGKIPKEYIKSIEKGLKEKMEIGILAGYPLIDVKATLFDGSYHEVDSSELAYKIAASKSLTKGREMLGTVLLEPIMDVAVVIPEDFFGDVMGDISRRRGQVRDNETRNDGAHVIKAYIPLSEMFGYATELRSMTTGRGTYQMWFDHYEKLPRNLADEIIKKRGGKVKIDED.

In terms of domain architecture, tr-type G spans 8–282; sequence EDYRNIGIMA…AIVDYLPSPL (275 aa). GTP contacts are provided by residues 17–24, 81–85, and 135–138; these read AHIDAGKT, DTPGH, and NKMD.

This sequence belongs to the TRAFAC class translation factor GTPase superfamily. Classic translation factor GTPase family. EF-G/EF-2 subfamily.

It is found in the cytoplasm. Catalyzes the GTP-dependent ribosomal translocation step during translation elongation. During this step, the ribosome changes from the pre-translocational (PRE) to the post-translocational (POST) state as the newly formed A-site-bound peptidyl-tRNA and P-site-bound deacylated tRNA move to the P and E sites, respectively. Catalyzes the coordinated movement of the two tRNA molecules, the mRNA and conformational changes in the ribosome. This chain is Elongation factor G, found in Metamycoplasma arthritidis (strain 158L3-1) (Mycoplasma arthritidis).